We begin with the raw amino-acid sequence, 360 residues long: RNA-binding protein 1 (360 aa).

The region spanning 6–82 (YKLFVGGIAK…KPVDVRKAIR (77 aa)) is the RRM 1 domain. Residues 93 to 113 (MQFLERKVQQMNGGLREMSSN) are a coiled coil. Residues 120–197 (KKIFVGGLSS…KRVEVKRAIP (78 aa)) form the RRM 2 domain.

As to expression, highly expressed in inflorescences and roots. Detected in leaves and seedlings, but not in stems. Expressed in vegetative shoot apex and root meristem, but not in root cap. Detected in flower buds, junction of pedicels, joints of immature siliques and pistil.

Functionally, RNA binding protein. Can also bind in vitro to single-stranded DNA. This Arabidopsis thaliana (Mouse-ear cress) protein is RNA-binding protein 1 (RBP1).